The chain runs to 569 residues: Phospholipase B-like protein D (569 aa).

The N-terminal stretch at M1 to C22 is a signal peptide. 5 N-linked (GlcNAc...) asparagine glycosylation sites follow: N93, N126, N181, N425, and N430.

It belongs to the phospholipase B-like family.

The protein resides in the secreted. Probable phospholipase. The sequence is that of Phospholipase B-like protein D (plbD) from Dictyostelium discoideum (Social amoeba).